The sequence spans 120 residues: Aspartate 1-decarboxylase (120 aa).

The active-site Schiff-base intermediate with substrate; via pyruvic acid is Ser25. Pyruvic acid (Ser) is present on Ser25. Thr57 lines the substrate pocket. The Proton donor role is filled by Tyr58. Gly73–Ala75 contacts substrate.

The protein belongs to the PanD family. As to quaternary structure, heterooctamer of four alpha and four beta subunits. The cofactor is pyruvate. In terms of processing, is synthesized initially as an inactive proenzyme, which is activated by self-cleavage at a specific serine bond to produce a beta-subunit with a hydroxyl group at its C-terminus and an alpha-subunit with a pyruvoyl group at its N-terminus.

Its subcellular location is the cytoplasm. The enzyme catalyses L-aspartate + H(+) = beta-alanine + CO2. The protein operates within cofactor biosynthesis; (R)-pantothenate biosynthesis; beta-alanine from L-aspartate: step 1/1. Catalyzes the pyruvoyl-dependent decarboxylation of aspartate to produce beta-alanine. This is Aspartate 1-decarboxylase from Polynucleobacter asymbioticus (strain DSM 18221 / CIP 109841 / QLW-P1DMWA-1) (Polynucleobacter necessarius subsp. asymbioticus).